We begin with the raw amino-acid sequence, 124 residues long: Hydrogenase maturation factor HypA (124 aa).

His-2 contacts Ni(2+). Cys-78, Cys-81, Cys-97, and Cys-100 together coordinate Zn(2+).

It belongs to the HypA/HybF family.

Involved in the maturation of [NiFe] hydrogenases. Required for nickel insertion into the metal center of the hydrogenase. The polypeptide is Hydrogenase maturation factor HypA (Methanocaldococcus jannaschii (strain ATCC 43067 / DSM 2661 / JAL-1 / JCM 10045 / NBRC 100440) (Methanococcus jannaschii)).